The following is a 212-amino-acid chain: Adenylate kinase (212 aa).

ATP is bound at residue 10 to 15 (GAGKGT). Residues 30–59 (STGDMFRAAMANQTEMGVLAKSYIDKGELV) are NMP. AMP contacts are provided by residues Thr-31, Arg-36, 57–59 (ELV), 86–89 (GYPR), and Gln-93. The tract at residues 127–159 (GRIIHRVTGETFHKVFNPPVDYKEEDYYQREDD) is LID. ATP-binding positions include Arg-128 and 137–138 (TF). AMP contacts are provided by Arg-156 and Arg-167. Gln-195 contributes to the ATP binding site.

It belongs to the adenylate kinase family. As to quaternary structure, monomer.

It is found in the cytoplasm. The enzyme catalyses AMP + ATP = 2 ADP. The protein operates within purine metabolism; AMP biosynthesis via salvage pathway; AMP from ADP: step 1/1. In terms of biological role, catalyzes the reversible transfer of the terminal phosphate group between ATP and AMP. Plays an important role in cellular energy homeostasis and in adenine nucleotide metabolism. The protein is Adenylate kinase of Streptococcus pneumoniae serotype 4 (strain ATCC BAA-334 / TIGR4).